The chain runs to 185 residues: Lipopolysaccharide export system protein LptA (185 aa).

Positions 1–27 (MKFKTNKLSLNLVLASSLLAASIPAFA) are cleaved as a signal peptide. Positions 166-185 (PSQLQDKNNKGQTPAQKKGN) are disordered.

This sequence belongs to the LptA family. Component of the lipopolysaccharide transport and assembly complex.

It localises to the periplasm. Involved in the assembly of lipopolysaccharide (LPS). Required for the translocation of LPS from the inner membrane to the outer membrane. May form a bridge between the inner membrane and the outer membrane, via interactions with LptC and LptD, thereby facilitating LPS transfer across the periplasm. The sequence is that of Lipopolysaccharide export system protein LptA from Escherichia coli O157:H7.